Reading from the N-terminus, the 361-residue chain is D-alanine--D-alanine ligase (361 aa).

Residues 144–350 (KLCVSEAGIA…FPELCDRLLQ (207 aa)) form the ATP-grasp domain. 177-232 (PETLIYPVFVKPAHLGSSVGISKVSVQGELPEALAHACNLDTKVLIEQAMHGKEIE) serves as a coordination point for ATP. Mg(2+) is bound by residues Asp303, Glu317, and Asn319.

It belongs to the D-alanine--D-alanine ligase family. Mg(2+) serves as cofactor. The cofactor is Mn(2+).

Its subcellular location is the cytoplasm. The catalysed reaction is 2 D-alanine + ATP = D-alanyl-D-alanine + ADP + phosphate + H(+). It participates in cell wall biogenesis; peptidoglycan biosynthesis. Its function is as follows. Cell wall formation. The polypeptide is D-alanine--D-alanine ligase (Chlorobium phaeovibrioides (strain DSM 265 / 1930) (Prosthecochloris vibrioformis (strain DSM 265))).